The primary structure comprises 724 residues: MKDLQKLSPEIVTINQSFEMEGADMDKMLIFFYEDLRAIGDSWIMDSDWIYRSKYKNSGVGKNKSDRLVEHVLAALDGLIKTTRERFGMMDLESEGRKSFTTPKGVSSEARRSFTRSASYSESNNSFYPSPLTPRSVLPGTMMMSSNSTSPSLWNLRAQALDRLSPVDLKRFAMQILSQRDSESVSETKIGIEEENEESEILAEEKEEEDNDFSVLETEGTEQEIKTEHHRESSGTEHETEAKDHSEGFETEHHRIECFETEHEIDADDHIEDFETEHHHIEGLETEHEIDANDHIEDFETEHHHIEGFETEHENETEDHSETTTSETDSTESSPKEDVPPPPPLTSPQTPSPTVSTFNTKSSLRSQPPPPPPSPEHKAPAPPPPPPMSKASESGEFCQFSKTHSTNGDNAPSMPAPPAPPGSGRSLKKATSKLRRSAQIANLYWALKGKLEGRGVEGKTKKASKGQNSVAEKSPVKVARSGMADALAEMTKRSSYFQQIEEDVQKYAKSIEELKSSIHSFQTKDMKELLEFHSKVESILEKLTDETQVLARFEGFPEKKLEVIRTAGALYKKLDGILVELKNWKIEPPLNDLLDKIERYFNKFKGEIETVERTKDEDAKMFKRYNINIDFEVLVQVKETMVDVSSNCMELALKERREANEEAKNGEESKMKEERAKRLWRAFQFAFKVYTFAGGHDERADCLTRQLAHEIQTDPDQSESSIMS.

Disordered regions lie at residues 97–131 (RKSFTTPKGVSSEARRSFTRSASYSESNNSFYPSP), 187–252 (ETKI…FETE), 309–434 (FETE…TSKL), and 454–473 (RGVEGKTKKASKGQNSVAEK). Positions 115–128 (TRSASYSESNNSFY) are enriched in polar residues. Positions 187–217 (ETKIGIEEENEESEILAEEKEEEDNDFSVLE) form a coiled coil. Acidic residues predominate over residues 193–212 (EEENEESEILAEEKEEEDND). 2 stretches are compositionally biased toward basic and acidic residues: residues 223-252 (QEIKTEHHRESSGTEHETEAKDHSEGFETE) and 309-322 (FETEHENETEDHSE). Low complexity-rich tracts occupy residues 323–333 (TTTSETDSTES) and 347–366 (SPQTPSPTVSTFNTKSSLRS). A compositionally biased stretch (pro residues) spans 367 to 388 (QPPPPPPSPEHKAPAPPPPPPM). The segment covering 400–410 (FSKTHSTNGDN) has biased composition (polar residues). 2 coiled-coil regions span residues 495–522 (SYFQQIEEDVQKYAKSIEELKSSIHSFQ) and 649–678 (MELALKERREANEEAKNGEESKMKEERAKR).

This is an uncharacterized protein from Arabidopsis thaliana (Mouse-ear cress).